Reading from the N-terminus, the 396-residue chain is Elongation factor Tu (396 aa).

The 197-residue stretch at 10–206 folds into the tr-type G domain; it reads KPHVNVGTIG…VLDTYIPEPE (197 aa). The segment at 19-26 is G1; that stretch reads GHVDHGKT. Residue 19–26 participates in GTP binding; that stretch reads GHVDHGKT. Position 26 (Thr26) interacts with Mg(2+). The G2 stretch occupies residues 60–64; that stretch reads GITIN. Residues 81 to 84 form a G3 region; that stretch reads DCPG. Residues 81–85 and 136–139 each bind GTP; these read DCPGH and NKCD. Residues 136–139 are G4; the sequence is NKCD. The interval 174–176 is G5; it reads SAT.

Belongs to the TRAFAC class translation factor GTPase superfamily. Classic translation factor GTPase family. EF-Tu/EF-1A subfamily. Monomer.

Its subcellular location is the cytoplasm. The catalysed reaction is GTP + H2O = GDP + phosphate + H(+). Its function is as follows. GTP hydrolase that promotes the GTP-dependent binding of aminoacyl-tRNA to the A-site of ribosomes during protein biosynthesis. This chain is Elongation factor Tu, found in Psychrobacter arcticus (strain DSM 17307 / VKM B-2377 / 273-4).